A 492-amino-acid polypeptide reads, in one-letter code: Ketol-acid reductoisomerase (NADP(+)) (492 aa).

In terms of domain architecture, KARI N-terminal Rossmann spans 14–208 (LDQLGRCRFM…GGHKAGVLES (195 aa)). NADP(+) contacts are provided by residues 45 to 48 (CGAQ), R68, R76, S78, and 108 to 110 (DKQ). The active site involves H132. Position 158 (G158) interacts with NADP(+). 2 KARI C-terminal knotted domains span residues 209–344 (SFVA…NAPK) and 345–485 (YDGK…MTDM). 4 residues coordinate Mg(2+): D217, E221, E389, and E393. A substrate-binding site is contributed by S414.

This sequence belongs to the ketol-acid reductoisomerase family. Mg(2+) serves as cofactor.

The catalysed reaction is (2R)-2,3-dihydroxy-3-methylbutanoate + NADP(+) = (2S)-2-acetolactate + NADPH + H(+). It carries out the reaction (2R,3R)-2,3-dihydroxy-3-methylpentanoate + NADP(+) = (S)-2-ethyl-2-hydroxy-3-oxobutanoate + NADPH + H(+). It functions in the pathway amino-acid biosynthesis; L-isoleucine biosynthesis; L-isoleucine from 2-oxobutanoate: step 2/4. Its pathway is amino-acid biosynthesis; L-valine biosynthesis; L-valine from pyruvate: step 2/4. In terms of biological role, involved in the biosynthesis of branched-chain amino acids (BCAA). Catalyzes an alkyl-migration followed by a ketol-acid reduction of (S)-2-acetolactate (S2AL) to yield (R)-2,3-dihydroxy-isovalerate. In the isomerase reaction, S2AL is rearranged via a Mg-dependent methyl migration to produce 3-hydroxy-3-methyl-2-ketobutyrate (HMKB). In the reductase reaction, this 2-ketoacid undergoes a metal-dependent reduction by NADPH to yield (R)-2,3-dihydroxy-isovalerate. This is Ketol-acid reductoisomerase (NADP(+)) from Haemophilus influenzae (strain PittEE).